A 485-amino-acid chain; its full sequence is Ribulose bisphosphate carboxylase large chain (485 aa).

Substrate is bound by residues asparagine 124 and threonine 174. The Proton acceptor role is filled by lysine 176. Residue lysine 178 participates in substrate binding. Mg(2+) contacts are provided by lysine 202, aspartate 204, and glutamate 205. Lysine 202 carries the post-translational modification N6-carboxylysine. Residue histidine 294 is the Proton acceptor of the active site. Residues arginine 295, histidine 327, and serine 379 each coordinate substrate.

The protein belongs to the RuBisCO large chain family. Type I subfamily. In terms of assembly, heterohexadecamer of 8 large chains and 8 small chains. The cofactor is Mg(2+).

The enzyme catalyses 2 (2R)-3-phosphoglycerate + 2 H(+) = D-ribulose 1,5-bisphosphate + CO2 + H2O. The catalysed reaction is D-ribulose 1,5-bisphosphate + O2 = 2-phosphoglycolate + (2R)-3-phosphoglycerate + 2 H(+). In terms of biological role, ruBisCO catalyzes two reactions: the carboxylation of D-ribulose 1,5-bisphosphate, the primary event in carbon dioxide fixation, as well as the oxidative fragmentation of the pentose substrate. Both reactions occur simultaneously and in competition at the same active site. The polypeptide is Ribulose bisphosphate carboxylase large chain (Rhodopseudomonas palustris (strain TIE-1)).